Here is a 207-residue protein sequence, read N- to C-terminus: TM2 domain-containing protein 1 (207 aa).

An N-terminal signal peptide occupies residues 1–37 (MAAAWPSGPSAPEAVTARLVGVLWFVSVTTGPWGAVA). Residues 40 to 128 (AGGEESLKCE…YSYKVAVALS (89 aa)) are Extracellular-facing. Residues Asn72, Asn75, Asn87, and Asn96 are each glycosylated (N-linked (GlcNAc...) asparagine). One can recognise a TM2 domain in the interval 118–166 (GYSYKVAVALSLFLGWLGADRFYLGYPALGLLKFCTVGFCGIGSLIDFI). Residues 129-149 (LFLGWLGADRFYLGYPALGLL) form a helical membrane-spanning segment. Residues 150–153 (KFCT) are Cytoplasmic-facing. The helical transmembrane segment at 154–174 (VGFCGIGSLIDFILISMQIVG) threads the bilayer. The Extracellular portion of the chain corresponds to 175–207 (PSDGSSYIIDYYGTRLTRLSITNETFRKTQLYP). Asn197 is a glycosylation site (N-linked (GlcNAc...) asparagine).

This sequence belongs to the TM2 family. As to quaternary structure, interacts with APP beta-APP42 (amyloid-beta protein 42). In terms of processing, N-glycosylated. As to expression, widely expressed.

It is found in the membrane. In terms of biological role, may participate in amyloid-beta-induced apoptosis via its interaction with beta-APP42. The polypeptide is TM2 domain-containing protein 1 (TM2D1) (Homo sapiens (Human)).